Consider the following 305-residue polypeptide: UDP-N-acetylenolpyruvoylglucosamine reductase 2 (305 aa).

The FAD-binding PCMH-type domain maps to 33 to 197 (VGGKADVFVA…LEARFELEEG (165 aa)). Arg176 is a catalytic residue. Ser226 (proton donor) is an active-site residue. Glu296 is an active-site residue.

Belongs to the MurB family. FAD is required as a cofactor.

It is found in the cytoplasm. It catalyses the reaction UDP-N-acetyl-alpha-D-muramate + NADP(+) = UDP-N-acetyl-3-O-(1-carboxyvinyl)-alpha-D-glucosamine + NADPH + H(+). The protein operates within cell wall biogenesis; peptidoglycan biosynthesis. Cell wall formation. This is UDP-N-acetylenolpyruvoylglucosamine reductase 2 from Bacillus thuringiensis subsp. konkukian (strain 97-27).